We begin with the raw amino-acid sequence, 183 residues long: Peptide deformylase (183 aa).

Positions 110 and 153 each coordinate Fe cation. E154 is a catalytic residue. H157 contacts Fe cation.

The protein belongs to the polypeptide deformylase family. Fe(2+) serves as cofactor.

The catalysed reaction is N-terminal N-formyl-L-methionyl-[peptide] + H2O = N-terminal L-methionyl-[peptide] + formate. Removes the formyl group from the N-terminal Met of newly synthesized proteins. Requires at least a dipeptide for an efficient rate of reaction. N-terminal L-methionine is a prerequisite for activity but the enzyme has broad specificity at other positions. This chain is Peptide deformylase, found in Listeria monocytogenes serotype 4b (strain CLIP80459).